Reading from the N-terminus, the 128-residue chain is Azurin (128 aa).

The 128-residue stretch at 1 to 128 folds into the Plastocyanin-like domain; that stretch reads AECKTTIDST…SMMKGTVTLK (128 aa). Cysteines 3 and 26 form a disulfide. Residues His-46, Cys-112, His-117, and Met-121 each coordinate Cu cation.

It is found in the periplasm. Transfers electrons from cytochrome c551 to cytochrome oxidase. The protein is Azurin of Pseudomonas fluorescens biotype B.